Consider the following 334-residue polypeptide: Malate dehydrogenase 2 (334 aa).

19-25 (IGAGKVG) contacts NAD(+). Substrate-binding residues include Arg100 and Arg106. Residues Asn113 and 136-138 (VSN) contribute to the NAD(+) site. Substrate-binding residues include Asn138 and Arg169. His193 serves as the catalytic Proton acceptor.

The protein belongs to the LDH/MDH superfamily.

It catalyses the reaction (S)-malate + NAD(+) = oxaloacetate + NADH + H(+). Functionally, catalyzes the reversible oxidation of malate to oxaloacetate. In Aquifex aeolicus (strain VF5), this protein is Malate dehydrogenase 2.